Consider the following 610-residue polypeptide: Zinc finger protein 823 (610 aa).

The 94-residue stretch at 4 to 97 (VAFEDVAVNF…VNKNTPRVNP (94 aa)) folds into the KRAB domain. 10 consecutive C2H2-type zinc fingers follow at residues 164-186 (FDCK…MAAH), 192-214 (YKCK…ERTH), 220-242 (YECK…ERIH), 248-270 (YECK…ERTH), 276-298 (YKCT…ERTH), 304-326 (YACK…MIRH), 332-354 (HKCK…ETTH), 360-382 (YECK…MITH), 388-410 (QKCK…ERTH), and 416-438 (YQCK…EATH). The C2H2-type 11; atypical zinc-finger motif lies at 444 to 465 (YKCQCGKAFSDLSSFQNHETTH). 5 C2H2-type zinc fingers span residues 471-493 (YECK…KRTH), 499-521 (YECK…ERIH), 527-549 (YECK…ERIH), 555-577 (YECL…EKTH), and 583-605 (YECK…KRTH).

This sequence belongs to the krueppel C2H2-type zinc-finger protein family.

It localises to the nucleus. Functionally, may be involved in transcriptional regulation. This Homo sapiens (Human) protein is Zinc finger protein 823 (ZNF823).